We begin with the raw amino-acid sequence, 375 residues long: Succinyl-diaminopimelate desuccinylase (375 aa).

Zn(2+) is bound at residue histidine 66. Residue aspartate 68 is part of the active site. Zn(2+) is bound at residue aspartate 99. The Proton acceptor role is filled by glutamate 133. Glutamate 134, glutamate 162, and histidine 348 together coordinate Zn(2+).

This sequence belongs to the peptidase M20A family. DapE subfamily. In terms of assembly, homodimer. The cofactor is Zn(2+). It depends on Co(2+) as a cofactor.

It carries out the reaction N-succinyl-(2S,6S)-2,6-diaminopimelate + H2O = (2S,6S)-2,6-diaminopimelate + succinate. The protein operates within amino-acid biosynthesis; L-lysine biosynthesis via DAP pathway; LL-2,6-diaminopimelate from (S)-tetrahydrodipicolinate (succinylase route): step 3/3. In terms of biological role, catalyzes the hydrolysis of N-succinyl-L,L-diaminopimelic acid (SDAP), forming succinate and LL-2,6-diaminopimelate (DAP), an intermediate involved in the bacterial biosynthesis of lysine and meso-diaminopimelic acid, an essential component of bacterial cell walls. This is Succinyl-diaminopimelate desuccinylase from Escherichia coli O139:H28 (strain E24377A / ETEC).